We begin with the raw amino-acid sequence, 167 residues long: Small ribosomal subunit protein uS5 (167 aa).

Residues 12-75 (LQEKLIAVNR…EKARRNIVTV (64 aa)) form the S5 DRBM domain.

The protein belongs to the universal ribosomal protein uS5 family. As to quaternary structure, part of the 30S ribosomal subunit. Contacts proteins S4 and S8.

Functionally, with S4 and S12 plays an important role in translational accuracy. In terms of biological role, located at the back of the 30S subunit body where it stabilizes the conformation of the head with respect to the body. This chain is Small ribosomal subunit protein uS5, found in Shewanella baltica (strain OS223).